A 134-amino-acid chain; its full sequence is ATP synthase epsilon chain, chloroplastic (134 aa).

The protein belongs to the ATPase epsilon chain family. In terms of assembly, F-type ATPases have 2 components, CF(1) - the catalytic core - and CF(0) - the membrane proton channel. CF(1) has five subunits: alpha(3), beta(3), gamma(1), delta(1), epsilon(1). CF(0) has three main subunits: a, b and c.

It localises to the plastid. Its subcellular location is the chloroplast thylakoid membrane. In terms of biological role, produces ATP from ADP in the presence of a proton gradient across the membrane. The protein is ATP synthase epsilon chain, chloroplastic of Porphyra purpurea (Red seaweed).